The primary structure comprises 258 residues: 3-deoxy-manno-octulosonate cytidylyltransferase (258 aa).

This sequence belongs to the KdsB family.

It is found in the cytoplasm. It catalyses the reaction 3-deoxy-alpha-D-manno-oct-2-ulosonate + CTP = CMP-3-deoxy-beta-D-manno-octulosonate + diphosphate. Its pathway is nucleotide-sugar biosynthesis; CMP-3-deoxy-D-manno-octulosonate biosynthesis; CMP-3-deoxy-D-manno-octulosonate from 3-deoxy-D-manno-octulosonate and CTP: step 1/1. It participates in bacterial outer membrane biogenesis; lipopolysaccharide biosynthesis. Activates KDO (a required 8-carbon sugar) for incorporation into bacterial lipopolysaccharide in Gram-negative bacteria. This is 3-deoxy-manno-octulosonate cytidylyltransferase from Blochmanniella floridana.